Consider the following 271-residue polypeptide: Hachiman protein HamA (271 aa).

Functionally, component of antiviral defense system Hachiman, composed of HamA and HamB. Expression of Hachiman in B.subtilis (strain BEST7003) confers resistance to phages phi105, phi29, phi3T, rho14, SBSphiJ, SpBeta and SPR. This is Hachiman protein HamA from Bacillus cereus.